The primary structure comprises 190 residues: Guanylate kinase (190 aa).

Residues 3–185 (NYIFIVSAPS…SLEQFCKYFE (183 aa)) enclose the Guanylate kinase-like domain. Position 10–17 (10–17 (APSGAGKS)) interacts with ATP.

The protein belongs to the guanylate kinase family.

The protein localises to the cytoplasm. The enzyme catalyses GMP + ATP = GDP + ADP. Essential for recycling GMP and indirectly, cGMP. This chain is Guanylate kinase, found in Francisella tularensis subsp. tularensis (strain FSC 198).